Here is a 357-residue protein sequence, read N- to C-terminus: Sorbitol dehydrogenase (357 aa).

Alanine 2 bears the N-acetylalanine mark. Cysteine 45 is a Zn(2+) binding site. Tyrosine 51 lines the substrate pocket. Zn(2+) contacts are provided by histidine 70, glutamate 71, and glutamate 156. Residue glutamate 156 participates in substrate binding. Position 169 is a phosphoserine (serine 169). NAD(+)-binding positions include isoleucine 184, aspartate 204, arginine 209, 273 to 275, and 297 to 299; these read VGM and VFR. Arginine 299 and tyrosine 300 together coordinate substrate.

It belongs to the zinc-containing alcohol dehydrogenase family. As to quaternary structure, homotetramer; dimer of dimers. Requires Zn(2+) as cofactor. As to expression, expressed in liver and testis.

It localises to the mitochondrion membrane. The protein localises to the cell projection. It is found in the cilium. The protein resides in the flagellum. It catalyses the reaction keto-D-fructose + NADH + H(+) = D-sorbitol + NAD(+). It carries out the reaction xylitol + NAD(+) = D-xylulose + NADH + H(+). The catalysed reaction is L-iditol + NAD(+) = keto-L-sorbose + NADH + H(+). Its function is as follows. Polyol dehydrogenase that catalyzes the reversible NAD(+)-dependent oxidation of various sugar alcohols. Is active with D-sorbitol (D-glucitol) leading to the C2-oxidized product D-fructose. Is a key enzyme in the polyol pathway that interconverts glucose and fructose via sorbitol, which constitutes an important alternate route for glucose metabolism. May play a role in sperm motility by using sorbitol as an alternative energy source for sperm motility. The polypeptide is Sorbitol dehydrogenase (Sord) (Rattus norvegicus (Rat)).